The chain runs to 312 residues: Holliday junction branch migration complex subunit RuvB (312 aa).

Residues 1-168 (MKTNYEFRPQ…FGHIFHLNEY (168 aa)) form a large ATPase domain (RuvB-L) region. ATP is bound by residues arginine 8, glycine 49, lysine 52, threonine 53, threonine 54, 115–117 (EDF), arginine 158, tyrosine 168, and arginine 206. Threonine 53 contributes to the Mg(2+) binding site. Positions 169–234 (EPSEISAIIL…DIKNIFKKIQ (66 aa)) are small ATPAse domain (RuvB-S). Residues 237–312 (EFGLDEQDIN…DFLKNNQLIK (76 aa)) form a head domain (RuvB-H) region. DNA-binding residues include lysine 290 and arginine 295.

This sequence belongs to the RuvB family. As to quaternary structure, homohexamer. Forms an RuvA(8)-RuvB(12)-Holliday junction (HJ) complex. HJ DNA is sandwiched between 2 RuvA tetramers; dsDNA enters through RuvA and exits via RuvB. An RuvB hexamer assembles on each DNA strand where it exits the tetramer. Each RuvB hexamer is contacted by two RuvA subunits (via domain III) on 2 adjacent RuvB subunits; this complex drives branch migration. In the full resolvosome a probable DNA-RuvA(4)-RuvB(12)-RuvC(2) complex forms which resolves the HJ.

The protein resides in the cytoplasm. The catalysed reaction is ATP + H2O = ADP + phosphate + H(+). Its function is as follows. The RuvA-RuvB-RuvC complex processes Holliday junction (HJ) DNA during genetic recombination and DNA repair, while the RuvA-RuvB complex plays an important role in the rescue of blocked DNA replication forks via replication fork reversal (RFR). RuvA specifically binds to HJ cruciform DNA, conferring on it an open structure. The RuvB hexamer acts as an ATP-dependent pump, pulling dsDNA into and through the RuvAB complex. RuvB forms 2 homohexamers on either side of HJ DNA bound by 1 or 2 RuvA tetramers; 4 subunits per hexamer contact DNA at a time. Coordinated motions by a converter formed by DNA-disengaged RuvB subunits stimulates ATP hydrolysis and nucleotide exchange. Immobilization of the converter enables RuvB to convert the ATP-contained energy into a lever motion, pulling 2 nucleotides of DNA out of the RuvA tetramer per ATP hydrolyzed, thus driving DNA branch migration. The RuvB motors rotate together with the DNA substrate, which together with the progressing nucleotide cycle form the mechanistic basis for DNA recombination by continuous HJ branch migration. Branch migration allows RuvC to scan DNA until it finds its consensus sequence, where it cleaves and resolves cruciform DNA. The polypeptide is Holliday junction branch migration complex subunit RuvB (Ureaplasma parvum serovar 3 (strain ATCC 27815 / 27 / NCTC 11736)).